Consider the following 426-residue polypeptide: Histidine--tRNA ligase (426 aa).

Belongs to the class-II aminoacyl-tRNA synthetase family. As to quaternary structure, homodimer.

It localises to the cytoplasm. It catalyses the reaction tRNA(His) + L-histidine + ATP = L-histidyl-tRNA(His) + AMP + diphosphate + H(+). This chain is Histidine--tRNA ligase, found in Legionella pneumophila subsp. pneumophila (strain Philadelphia 1 / ATCC 33152 / DSM 7513).